Reading from the N-terminus, the 870-residue chain is Dynamin-2 (870 aa).

Residues 28–294 enclose the Dynamin-type G domain; it reads HLDLPQIAVV…LTNHIRESLP (267 aa). A G1 motif region spans residues 38 to 45; it reads GGQSAGKS. 7 residues coordinate GDP: S41, G43, K44, S45, S46, R59, and G60. The segment at 64-66 is G2 motif; that stretch reads VTR. The interval 136–139 is G3 motif; sequence DLPG. Positions 205–208 are G4 motif; it reads TKLD. GDP is bound by residues K206, D208, and D211. Residue Y231 is modified to Phosphotyrosine; by SRC. Residues 235-238 form a G5 motif region; that stretch reads VNRS. GDP is bound by residues N236, R237, and Q239. K299 bears the N6-acetyllysine mark. In terms of domain architecture, PH spans 519-625; it reads LVIRRGWLTI…WKASFLRAGV (107 aa). At Y597 the chain carries Phosphotyrosine; by SRC. K598 bears the N6-acetyllysine mark. Residues 653 to 744 enclose the GED domain; the sequence is VETIRNLVDS…IIGDISTSTV (92 aa). A disordered region spans residues 741 to 870; sequence TSTVSTPVPP…IRPAEPSLLD (130 aa). T755 bears the Phosphothreonine mark. Residues 756–767 show a composition bias toward polar residues; sequence WLQSASSHSPTP. S764 bears the Phosphoserine; by CDK1 mark. A compositionally biased stretch (low complexity) spans 796–806; it reads VPVGAAASFSA. The segment covering 826 to 855 has biased composition (pro residues); it reads PAPPQIPSRPVRIPPGIPPGVPSRRPPAAP. S848 is subject to Phosphoserine; by GSK3-alpha.

It belongs to the TRAFAC class dynamin-like GTPase superfamily. Dynamin/Fzo/YdjA family. As to quaternary structure, oligomerizes into a helical polymer that self-assembles around the vesicle membrane, when associated to the menbrane through lipid binding. Interacts with SHANK1 and SHANK2. Interacts with SNX9. Interacts (via C-terminal proline-rich domain (PRD)) with SNX18 (via SH3 domain); this interaction regulates ATG9A and ATG16L1 trafficking from recycling endosomes to sites of autophagosome formation. Interacts with SNX33 (via SH3 domain). Interacts with MYO1E (via SH3 domain). Interacts with PSTPIP1 (via SH3 domain). Interacts with CTNND2. Interacts (via C-terminal proline-rich domain (PRD)) with BIN1 (via SH3 domain); this interaction allows the recruitment of DNM2 to the membrane tubules and inhibits self-assembly-stimulated GTPase activity on the membrane. Interacts with GABARAP, GABARAPL1 and GABARAPL2. Interacts with MAP1LC3B (the lipidate and non-lipidated LC3 form); this interaction mediates recycling endosome scission leading to autophagosome release. Interacts with ITSN1. Interacts (via C-terminal proline-rich domain (PRD)) with SH3BP4 (via SH3 domain); this interaction controls the GTPase activity and is prevented by EGFR-induced tyrosine phosphorylation of either DNM2 or SH3BP4. May interact with PIK3C3. May be a component of a complex composed of RAB5A (in GDP-bound form), DYN2 and PIK3C3. Interacts with SDC4; this interaction is markedly enhanced at focal ahesion site upon induction of focal adhesions and stress-fiber formation. Interacts with ACTN1. Interacts with CTTN; this interaction stimulates the intrinsic GTPase activity of DNM2 and stabilizes the association of DNM2 and actin filaments; in addition this interaction is stimulated by ligand binding to the receptor, leading to the recruitment of the DNM2-CTTN complex to the sequestered receptor-ligand complex to its internalization. Interacts with NOSTRIN (via SH3 domain); this interaction allows the recruitment of NOS3 to dynamin-positive structures. Interacts with TUBG1; this interaction may participate in centrosome cohesion. Post-translationally, phosphorylation at Ser-848 by GSK3-alpha relieves the inhibition of BIN1 and promotes endocytosis. Phosphorylation at Ser-764 by CDK1 is greatly increased upon mitotic entry. It regulates cytokinesis downstream of calcineurin, and does not affect clathrin-mediated endocytosis. Dephosphorylated by calcineurin/PP2 during cytokinesis in a Ca(2+)- and calmodulin-dependent manner. Phosphorylated on tyrosine residues by EGFR and after activation of SRC. As to expression, widely expressed. Expressed in skeletal muscle and the peripheral nerve.

The protein resides in the cytoplasm. It is found in the cytoskeleton. The protein localises to the cytoplasmic vesicle. Its subcellular location is the clathrin-coated vesicle. It localises to the cell projection. The protein resides in the uropodium. It is found in the endosome. The protein localises to the microtubule organizing center. Its subcellular location is the centrosome. It localises to the centriole. The protein resides in the recycling endosome. It is found in the phagocytic cup. The protein localises to the phagosome membrane. Its subcellular location is the podosome. It localises to the cell junction. The protein resides in the postsynaptic density. It is found in the synapse. The protein localises to the synaptosome. Its subcellular location is the midbody. It localises to the membrane. The protein resides in the clathrin-coated pit. It catalyses the reaction GTP + H2O = GDP + phosphate + H(+). Functionally, catalyzes the hydrolysis of GTP and utilizes this energy to mediate vesicle scission at plasma membrane during endocytosis and filament remodeling at many actin structures during organization of the actin cytoskeleton. Plays an important role in vesicular trafficking processes, namely clathrin-mediated endocytosis (CME), exocytic and clathrin-coated vesicle from the trans-Golgi network, and PDGF stimulated macropinocytosis. During vesicular trafficking process, associates to the membrane, through lipid binding, and self-assembles into ring-like structure through oligomerization to form a helical polymer around the vesicle membrane and leading to vesicle scission. Plays a role in organization of the actin cytoskeleton by mediating arrangement of stress fibers and actin bundles in podocytes. During organization of the actin cytoskeleton, self-assembles into ring-like structure that directly bundles actin filaments to form typical membrane tubules decorated with dynamin spiral polymers. Self-assembly increases GTPase activity and the GTP hydrolysis causes the rapid depolymerization of dynamin spiral polymers, and results in dispersion of actin bundles. Remodels, through its interaction with CTTN, bundled actin filaments in a GTPase-dependent manner and plays a role in orchestrating the global actomyosin cytoskeleton. The interaction with CTTN stabilizes the interaction of DNM2 and actin filaments and stimulates the intrinsic GTPase activity that results in actin filament-barbed ends and increases the sensitivity of filaments in bundles to the actin depolymerizing factor, CFL1. Plays a role in the autophagy process, by participating in the formation of ATG9A vesicles destined for the autophagosomes through its interaction with SNX18, by mediating recycling endosome scission leading to autophagosome release through MAP1LC3B interaction. Also regulates maturation of apoptotic cell corpse-containing phagosomes by recruiting PIK3C3 to the phagosome membrane. Also plays a role in cytokinesis. May participate in centrosome cohesion through its interaction with TUBG1. Plays a role in the regulation of neuron morphology, axon growth and formation of neuronal growth cones. Involved in membrane tubulation. In Homo sapiens (Human), this protein is Dynamin-2.